Here is a 428-residue protein sequence, read N- to C-terminus: Lupus La protein homolog A (428 aa).

Residues Lys-7–Glu-99 form the HTH La-type RNA-binding domain. Positions Lys-111 to Glu-203 constitute an RRM domain. Disordered regions lie at residues Glu-187–Arg-223 and Gln-323–Gln-428. 2 short sequence motifs (nuclear localization signal) span residues Arg-196–Lys-212 and Lys-316–Arg-332. A xRRM domain is found at Glu-227–Ser-349. 2 stretches are compositionally biased toward basic residues: residues Lys-328–Gly-343 and Arg-352–Lys-361. Over residues Ser-366–Glu-377 the composition is skewed to acidic residues. Residues Arg-406–Gln-428 are compositionally biased toward basic and acidic residues.

Post-translationally, phosphorylated.

The protein resides in the nucleus. La protein plays a role in the transcription of RNA polymerase III. It is most probably a transcription termination factor. Binds to the 3' termini of virtually all nascent polymerase III transcripts. The polypeptide is Lupus La protein homolog A (ssb-a) (Xenopus laevis (African clawed frog)).